A 976-amino-acid chain; its full sequence is Probable alanine--tRNA ligase, chloroplastic/mitochondrial (976 aa).

Residues 1–54 constitute a chloroplast and mitochondrion transit peptide; that stretch reads MPRPGFAHATAPALAHARARISPVARRRVVVMRTRVDGAAKSLVTQLRLALGST. The tract at residues 71-95 is disordered; the sequence is LGTATNDQSTGTRANPNAEGKDNSG. A compositionally biased stretch (polar residues) spans 73-85; that stretch reads TATNDQSTGTRAN.

It belongs to the class-II aminoacyl-tRNA synthetase family. In terms of assembly, monomer. The cofactor is Zn(2+).

Its subcellular location is the plastid. It localises to the chloroplast. The protein resides in the mitochondrion. It carries out the reaction tRNA(Ala) + L-alanine + ATP = L-alanyl-tRNA(Ala) + AMP + diphosphate. In terms of biological role, catalyzes the attachment of alanine to tRNA(Ala) in a two-step reaction: alanine is first activated by ATP to form Ala-AMP and then transferred to the acceptor end of tRNA(Ala). Also edits incorrectly charged tRNA(Ala) via its editing domain. This chain is Probable alanine--tRNA ligase, chloroplastic/mitochondrial, found in Ostreococcus tauri.